Consider the following 39-residue polypeptide: Cytochrome b6-f complex subunit 5 (39 aa).

Residues 5–25 (LLCGIVLGLVPITLLGLFVSA) form a helical membrane-spanning segment.

The protein belongs to the PetG family. As to quaternary structure, the 4 large subunits of the cytochrome b6-f complex are cytochrome b6, subunit IV (17 kDa polypeptide, PetD), cytochrome f and the Rieske protein, while the 4 small subunits are PetG, PetL, PetM and PetN. The complex functions as a dimer.

The protein resides in the cellular thylakoid membrane. Component of the cytochrome b6-f complex, which mediates electron transfer between photosystem II (PSII) and photosystem I (PSI), cyclic electron flow around PSI, and state transitions. PetG is required for either the stability or assembly of the cytochrome b6-f complex. The sequence is that of Cytochrome b6-f complex subunit 5 from Prochlorococcus marinus (strain MIT 9301).